Consider the following 359-residue polypeptide: GTP cyclohydrolase FolE2 (359 aa).

It belongs to the GTP cyclohydrolase IV family.

It catalyses the reaction GTP + H2O = 7,8-dihydroneopterin 3'-triphosphate + formate + H(+). It participates in cofactor biosynthesis; 7,8-dihydroneopterin triphosphate biosynthesis; 7,8-dihydroneopterin triphosphate from GTP: step 1/1. In terms of biological role, converts GTP to 7,8-dihydroneopterin triphosphate. This Cereibacter sphaeroides (strain KD131 / KCTC 12085) (Rhodobacter sphaeroides) protein is GTP cyclohydrolase FolE2.